Here is a 970-residue protein sequence, read N- to C-terminus: Translation initiation factor IF-2 (970 aa).

Disordered stretches follow at residues 54–270 and 328–348; these read KILA…TATQ and DKRR…KSLS. The span at 87–96 shows a compositional bias: low complexity; that stretch reads QEAQPVEAQP. The span at 98-112 shows a compositional bias: polar residues; that stretch reads YEEQPSYEEQPSYEE. The segment covering 121–149 has biased composition (low complexity); sequence EVAAEAAPEPVEEPASSPEGGAPAGGAEP. 2 stretches are compositionally biased toward pro residues: residues 150 to 160 and 168 to 182; these read QPAPEAPPPSA and PSAP…PAPS. The segment covering 183 to 253 has biased composition (low complexity); sequence VPAGAQPPGA…PHGPGAQPGQ (71 aa). Residues 469–638 form the tr-type G domain; the sequence is IRPPVVTVMG…ALQSEVLELK (170 aa). Residues 478–485 form a G1 region; it reads GHVDHGKT. 478–485 contributes to the GTP binding site; the sequence is GHVDHGKT. Residues 503 to 507 form a G2 region; it reads GITQH. Residues 524 to 527 form a G3 region; it reads DTPG. GTP-binding positions include 524-528 and 578-581; these read DTPGH and NKID. Positions 578–581 are G4; sequence NKID. The tract at residues 614-616 is G5; sequence SAR.

This sequence belongs to the TRAFAC class translation factor GTPase superfamily. Classic translation factor GTPase family. IF-2 subfamily.

The protein resides in the cytoplasm. In terms of biological role, one of the essential components for the initiation of protein synthesis. Protects formylmethionyl-tRNA from spontaneous hydrolysis and promotes its binding to the 30S ribosomal subunits. Also involved in the hydrolysis of GTP during the formation of the 70S ribosomal complex. In Anaeromyxobacter sp. (strain Fw109-5), this protein is Translation initiation factor IF-2.